The primary structure comprises 280 residues: Transmembrane protein 45B (280 aa).

The next 7 helical transmembrane spans lie at His-7–Leu-27, Leu-49–Val-69, Met-96–Leu-116, Leu-120–Val-140, Ile-150–Phe-170, Leu-184–Gly-204, and Val-216–Ile-236.

Belongs to the TMEM45 family.

The protein resides in the membrane. The protein is Transmembrane protein 45B (tmem45b) of Xenopus tropicalis (Western clawed frog).